Consider the following 115-residue polypeptide: MKVLVLFSVLFLTLFSYSSTEAIDEFDSDAEDDMLSLMANEQVRAKACTPRLHDCSHDRHSCCRSELFKDVCTCFYPEGGDNEVCTCQQPKHLKYMEKAADKAKKFGGKIKKWFG.

The first 22 residues, 1–22 (MKVLVLFSVLFLTLFSYSSTEA), serve as a signal peptide directing secretion. A propeptide spanning residues 23–44 (IDEFDSDAEDDMLSLMANEQVR) is cleaved from the precursor. 4 cysteine pairs are disulfide-bonded: Cys48-Cys63, Cys55-Cys72, Cys62-Cys87, and Cys74-Cys85.

This sequence belongs to the neurotoxin 19 (CSTX) family. 01 subfamily. As to expression, expressed by the venom gland.

The protein localises to the secreted. This Lycosa singoriensis (Wolf spider) protein is Toxin-like structure LSTX-D2.